We begin with the raw amino-acid sequence, 345 residues long: Phosphoribosylformylglycinamidine cyclo-ligase (345 aa).

It belongs to the AIR synthase family.

Its subcellular location is the cytoplasm. The enzyme catalyses 2-formamido-N(1)-(5-O-phospho-beta-D-ribosyl)acetamidine + ATP = 5-amino-1-(5-phospho-beta-D-ribosyl)imidazole + ADP + phosphate + H(+). The protein operates within purine metabolism; IMP biosynthesis via de novo pathway; 5-amino-1-(5-phospho-D-ribosyl)imidazole from N(2)-formyl-N(1)-(5-phospho-D-ribosyl)glycinamide: step 2/2. This chain is Phosphoribosylformylglycinamidine cyclo-ligase, found in Escherichia coli O45:K1 (strain S88 / ExPEC).